A 376-amino-acid chain; its full sequence is Homocitrate synthase (376 aa).

A Pyruvate carboxyltransferase domain is found at 4–259; sequence WKIIDSTLRE…RRKYKLEMLP (256 aa). Arg-12 lines the 2-oxoglutarate pocket. Position 13 (Glu-13) interacts with Mg(2+). His-72 lines the 2-oxoglutarate pocket. Asp-92 contacts L-lysine. Residue Arg-133 participates in 2-oxoglutarate binding. Ser-135 and Thr-166 together coordinate L-lysine. Thr-166 serves as a coordination point for 2-oxoglutarate. His-195 and His-197 together coordinate Mg(2+). His-292 serves as the catalytic Proton acceptor.

Belongs to the alpha-IPM synthase/homocitrate synthase family. Homocitrate synthase LYS20/LYS21 subfamily. As to quaternary structure, exists in an equilibrium between monomer and homodimer. Mg(2+) is required as a cofactor. Requires Mn(2+) as cofactor.

It localises to the cytoplasm. It carries out the reaction acetyl-CoA + 2-oxoglutarate + H2O = (2R)-homocitrate + CoA + H(+). The catalysed reaction is oxaloacetate + acetyl-CoA + H2O = citrate + CoA + H(+). The protein operates within amino-acid biosynthesis; L-lysine biosynthesis via AAA pathway; L-alpha-aminoadipate from 2-oxoglutarate: step 1/5. Its activity is regulated as follows. Is highly and competitively inhibited by lysine that binds to the active site and competes with 2-oxoglutarate. Is also slightly inhibited by arginine and 2-aminoethylcysteine. Catalyzes the aldol-type condensation of 2-oxoglutarate with acetyl-CoA to yield homocitrate. Carries out the first step of the alpha-aminoadipate (AAA) lysine biosynthesis pathway. To a lesser extent, can also use oxaloacetate in place of 2-oxoglutarate, leading to citrate. Does not display 2-isopropylmalate synthase activity since it cannot use 2-oxoisovalerate. The sequence is that of Homocitrate synthase from Thermus thermophilus (strain ATCC BAA-163 / DSM 7039 / HB27).